The following is a 262-amino-acid chain: Acyl-coenzyme A diphosphatase FITM2 (262 aa).

Topologically, residues 1 to 23 (MEHLERCAWVLRGTLVRSAVRKY) are cytoplasmic. The helical transmembrane segment at 24-44 (LPWALAASMLAGSLLKELSPL) threads the bilayer. The Lumenal portion of the chain corresponds to 45–57 (PESYLSNKRNVLN). Residues 58–78 (VYFVKVAWAWTFCLLLPFIAL) form a helical membrane-spanning segment. At 79-93 (TNYHLTGKAGLVLRR) the chain is on the cytoplasmic side. Residues 94 to 114 (LSTLLVGTAIWYVCTAIFSNI) form a helical membrane-spanning segment. Over 115 to 145 (EHYTGSCYQSPALEGERKEHQSKQQCHGEGG) the chain is Lumenal. The chain crosses the membrane as a helical span at residues 146-166 (FWHGFDISGHSFLLTFCALMI). H155 is an active-site residue. The Cytoplasmic portion of the chain corresponds to 167–190 (VEEMAVLHEVKTDRNHCLHAAITT). A helical transmembrane segment spans residues 191-211 (LVVALGFLTFIWVWMFLCTAV). The Lumenal segment spans residues 212 to 218 (YFHNLSQ). H214 is an active-site residue. The chain crosses the membrane as a helical span at residues 219-239 (KVFGTLFGLLGWYGTYGCWYL). Over 240 to 262 (KSFSPGLPPQSSSLNLKQDTYKK) the chain is Cytoplasmic.

The protein belongs to the FIT family. FIT2 subfamily.

The protein localises to the endoplasmic reticulum membrane. It carries out the reaction an acyl-CoA + H2O = an acyl-4'-phosphopantetheine + adenosine 3',5'-bisphosphate + 2 H(+). The enzyme catalyses (9Z)-octadecenoyl-CoA + H2O = S-(9Z-octadecenoyl)-4'-phosphopantetheine + adenosine 3',5'-bisphosphate + 2 H(+). It catalyses the reaction (5Z,8Z,11Z,14Z)-eicosatetraenoyl-CoA + H2O = S-(5Z,8Z,11Z,14Z-eicosatetraenoyl)-4'-phosphopantetheine + adenosine 3',5'-bisphosphate + 2 H(+). The catalysed reaction is hexadecanoyl-CoA + H2O = S-hexadecanoyl-4'-phosphopantetheine + adenosine 3',5'-bisphosphate + 2 H(+). In terms of biological role, fatty acyl-coenzyme A (CoA) diphosphatase that hydrolyzes fatty acyl-CoA to yield acyl-4'-phosphopantetheine and adenosine 3',5'-bisphosphate. Preferentially hydrolyzes unsaturated long-chain acyl-CoA substrates such as oleoyl-CoA/(9Z)-octadecenoyl-CoA and arachidonoyl-CoA/(5Z,8Z,11Z,14Z)-eicosatetraenoyl-CoA in the endoplasmic reticulum (ER) lumen. This catalytic activity is required for maintaining ER structure and for lipid droplets (LDs) biogenesis, which are lipid storage organelles involved in maintaining lipid and energy homeostasis. Directly binds to diacylglycerol (DAGs) and triacylglycerol, which is also important for LD biogenesis. May support directional budding of nacent LDs from the ER into the cytosol by reducing DAG levels at sites of LD formation. Plays a role in the regulation of cell morphology and cytoskeletal organization. The protein is Acyl-coenzyme A diphosphatase FITM2 of Bos taurus (Bovine).